The chain runs to 579 residues: Protein disulfide isomerase-like 1-3 (579 aa).

The N-terminal stretch at 1–25 is a signal peptide; sequence MASSSTSISLLLFVSFILLLVNSRA. N27 is a glycosylation site (N-linked (GlcNAc...) asparagine). 2 stretches are compositionally biased toward basic and acidic residues: residues 44–69 and 80–89; these read EESKEQSHGGGSYHEEEHDHQHRDFE and EFHHGDHGYE. The tract at residues 44–91 is disordered; that stretch reads EESKEQSHGGGSYHEEEHDHQHRDFENYDDLEQGGGEFHHGDHGYEEE. A Thioredoxin 1 domain is found at 81–204; that stretch reads FHHGDHGYEE…IVTWLKKKAS (124 aa). N108 and N115 each carry an N-linked (GlcNAc...) asparagine glycan. Active-site nucleophile residues include C128 and C131. A disulfide bond links C128 and C131. Residues N209, N293, N313, and N338 are each glycosylated (N-linked (GlcNAc...) asparagine). A Thioredoxin 2 domain is found at 416 to 546; sequence DFLADKLKPF…LYKFLKKHAS (131 aa). Catalysis depends on nucleophile residues C467 and C470. C467 and C470 are joined by a disulfide. N520 carries an N-linked (GlcNAc...) asparagine glycan. The disordered stretch occupies residues 558–579; the sequence is EPVISTMKSDEKIEGDSSKDEL. Basic and acidic residues predominate over residues 565–579; the sequence is KSDEKIEGDSSKDEL. Residues 576–579 carry the Prevents secretion from ER motif; the sequence is KDEL.

The protein belongs to the protein disulfide isomerase family. In terms of tissue distribution, widely expressed.

It localises to the endoplasmic reticulum lumen. The enzyme catalyses Catalyzes the rearrangement of -S-S- bonds in proteins.. Its function is as follows. Acts as a protein-folding catalyst that interacts with nascent polypeptides to catalyze the formation, isomerization, and reduction or oxidation of disulfide bonds. The protein is Protein disulfide isomerase-like 1-3 (PDIL1-3) of Arabidopsis thaliana (Mouse-ear cress).